The chain runs to 257 residues: NAD-capped RNA hydrolase NudC (257 aa).

Arg69 contacts substrate. The Zn(2+) site is built by Cys98 and Cys101. Residue Glu111 coordinates substrate. Zn(2+)-binding residues include Cys116 and Cys119. Residue Tyr124 participates in substrate binding. One can recognise a Nudix hydrolase domain in the interval 125 to 248; the sequence is PQIAPCIIVA…TVARRLIEDT (124 aa). Positions 158, 174, and 178 each coordinate a divalent metal cation. The Nudix box motif lies at 159-180; the sequence is GFVEVGETLEQAVAREVMEESG. 192-199 contacts substrate; it reads QPWPFPQS. Glu219 provides a ligand contact to a divalent metal cation. Residue Ala241 coordinates substrate.

It belongs to the Nudix hydrolase family. NudC subfamily. In terms of assembly, homodimer. It depends on Mg(2+) as a cofactor. Mn(2+) is required as a cofactor. Requires Zn(2+) as cofactor.

It carries out the reaction a 5'-end NAD(+)-phospho-ribonucleoside in mRNA + H2O = a 5'-end phospho-adenosine-phospho-ribonucleoside in mRNA + beta-nicotinamide D-ribonucleotide + 2 H(+). It catalyses the reaction NAD(+) + H2O = beta-nicotinamide D-ribonucleotide + AMP + 2 H(+). The enzyme catalyses NADH + H2O = reduced beta-nicotinamide D-ribonucleotide + AMP + 2 H(+). Functionally, mRNA decapping enzyme that specifically removes the nicotinamide adenine dinucleotide (NAD) cap from a subset of mRNAs by hydrolyzing the diphosphate linkage to produce nicotinamide mononucleotide (NMN) and 5' monophosphate mRNA. The NAD-cap is present at the 5'-end of some mRNAs and stabilizes RNA against 5'-processing. Has preference for mRNAs with a 5'-end purine. Catalyzes the hydrolysis of a broad range of dinucleotide pyrophosphates. This chain is NAD-capped RNA hydrolase NudC, found in Klebsiella pneumoniae subsp. pneumoniae (strain ATCC 700721 / MGH 78578).